Here is a 512-residue protein sequence, read N- to C-terminus: cAMP-dependent protein kinase catalytic subunit (512 aa).

Positions 1 to 15 are enriched in polar residues; sequence MDTTAVASKGSTNVG. 2 disordered regions span residues 1–79 and 118–166; these read MDTT…SSLW and IDNL…GLRD. The span at 16 to 27 shows a compositional bias: low complexity; that stretch reads SSTDTLSTSASL. Polar residues-rich tracts occupy residues 32-52 and 62-79; these read NAGS…SFNG and SDAS…SSLW. The span at 143–166 shows a compositional bias: basic and acidic residues; that stretch reads SRDGRGELGSEHGERRSAMDGLRD. A Protein kinase domain is found at 201 to 456; that stretch reads FNFLQTLGTG…SMDIIMHPWF (256 aa). ATP contacts are provided by residues 207 to 215 and lysine 230; that span reads LGTGSFGRV. Aspartate 324 serves as the catalytic Proton acceptor. Residue threonine 356 is modified to Phosphothreonine. Residues 457 to 512 form the AGC-kinase C-terminal domain; the sequence is RDISWDKILTRKIEVPYVPPIQAGMGDSSQFDAYADVATDYGTSEDPEFTSIFKDF.

The protein belongs to the protein kinase superfamily. AGC Ser/Thr protein kinase family. cAMP subfamily.

The catalysed reaction is L-seryl-[protein] + ATP = O-phospho-L-seryl-[protein] + ADP + H(+). It catalyses the reaction L-threonyl-[protein] + ATP = O-phospho-L-threonyl-[protein] + ADP + H(+). With respect to regulation, activated by cAMP. This Schizosaccharomyces pombe (strain 972 / ATCC 24843) (Fission yeast) protein is cAMP-dependent protein kinase catalytic subunit (pka1).